Reading from the N-terminus, the 242-residue chain is Large ribosomal subunit protein uL1 (242 aa).

This sequence belongs to the universal ribosomal protein uL1 family. As to quaternary structure, part of the 50S ribosomal subunit.

In terms of biological role, binds directly to 23S rRNA. The L1 stalk is quite mobile in the ribosome, and is involved in E site tRNA release. Protein L1 is also a translational repressor protein, it controls the translation of the L11 operon by binding to its mRNA. The chain is Large ribosomal subunit protein uL1 from Dictyoglomus thermophilum (strain ATCC 35947 / DSM 3960 / H-6-12).